The following is a 332-amino-acid chain: Anthranilate phosphoribosyltransferase (332 aa).

5-phospho-alpha-D-ribose 1-diphosphate contacts are provided by residues glycine 79, 82–83 (GD), threonine 87, 89–92 (NIST), 107–115 (KHGNRSVSS), and serine 119. Glycine 79 contributes to the anthranilate binding site. Serine 91 contributes to the Mg(2+) binding site. Asparagine 110 contacts anthranilate. Residue arginine 165 coordinates anthranilate. Mg(2+) contacts are provided by aspartate 223 and glutamate 224.

This sequence belongs to the anthranilate phosphoribosyltransferase family. As to quaternary structure, homodimer. It depends on Mg(2+) as a cofactor.

It carries out the reaction N-(5-phospho-beta-D-ribosyl)anthranilate + diphosphate = 5-phospho-alpha-D-ribose 1-diphosphate + anthranilate. It functions in the pathway amino-acid biosynthesis; L-tryptophan biosynthesis; L-tryptophan from chorismate: step 2/5. Functionally, catalyzes the transfer of the phosphoribosyl group of 5-phosphorylribose-1-pyrophosphate (PRPP) to anthranilate to yield N-(5'-phosphoribosyl)-anthranilate (PRA). The sequence is that of Anthranilate phosphoribosyltransferase from Vibrio vulnificus (strain YJ016).